A 170-amino-acid polypeptide reads, in one-letter code: MKPTERRILLGRIVGAFGVKGELKLESWTEPRSAIFRYQPWIVRTPSGQESVLSGVRGRDQGKNLIAVFPDITDRDTVEAMHGTEIYVARSALPPPKPDEYYWVDLEGLQVETVEGVKLGTVSHLFSTGSNDVVVVRGDRERMIPFVLPEYVKSVDFEANLIVVDWDPDF.

Positions 98–170 (PDEYYWVDLE…LIVVDWDPDF (73 aa)) constitute a PRC barrel domain.

This sequence belongs to the RimM family. As to quaternary structure, binds ribosomal protein uS19.

Its subcellular location is the cytoplasm. In terms of biological role, an accessory protein needed during the final step in the assembly of 30S ribosomal subunit, possibly for assembly of the head region. Essential for efficient processing of 16S rRNA. May be needed both before and after RbfA during the maturation of 16S rRNA. It has affinity for free ribosomal 30S subunits but not for 70S ribosomes. The sequence is that of Ribosome maturation factor RimM from Xanthomonas campestris pv. campestris (strain 8004).